The sequence spans 421 residues: MDLEARVKKMGLGHEQGFGAPCLKCKEKCEGFELHFWRKICRNCKCGQEEHDVLLSNEEDRKVGKLFEDTKYTTLIAKLKSDGIPMYKRNVMILTNPVAAKKNISINTVTYEWAPPVHNQALARQYMQMLPKEKQPVAGSEGAQYRKKQLAKQLPAHDQDPSKCHELTPREVKEMEQFVKKYKNEALGVGDVKLPQEMDTQGPNRIYIPGGDRSTAAAVGAMEDKSAEQKGTQYSCYCCKLSMKEGDPAVYAERAGYDKLWHPACFVCSACSELLVDMIYFWKNGKLYCGRHYCDSEKPRCAGCDELIFSNEYTQAENQNWHLKHFCCFDCDNILAGEIYVMVNDKPVCKPCYVKNHAVVCQGCHNAIDPEVQRVTYNNFSWHASTECFLCSCCSKCLIGQKFMPVEGMVFCSVECKKMMS.

One can recognise a PET domain in the interval Met92–Asp199. LIM zinc-binding domains lie at Tyr234 to Glu297, Pro299 to Val359, and Gln362 to Ser421.

The protein belongs to the prickle / espinas / testin family. Interacts via LIM domain 1 with ZYX. Interacts (via LIM domain 3) with ENAH and VASP. Interacts with ALKBH4, talin, actin, alpha-actinin, GRIP1 and PXN. Interacts (via LIM domain 2) with ACTL7A (via N-terminus). Heterodimer with ACTL7A; the heterodimer interacts with ENAH to form a heterotrimer.

The protein resides in the cytoplasm. The protein localises to the cell junction. It is found in the focal adhesion. Its function is as follows. Scaffold protein that may play a role in cell adhesion, cell spreading and in the reorganization of the actin cytoskeleton. Plays a role in the regulation of cell proliferation. May act as a tumor suppressor. This chain is Testin (TES), found in Loxodonta africana (African elephant).